The sequence spans 316 residues: Putative phosphoribosylaminoimidazole-succinocarboxamide synthase 2 (316 aa).

The protein belongs to the SAICAR synthetase family.

The enzyme catalyses 5-amino-1-(5-phospho-D-ribosyl)imidazole-4-carboxylate + L-aspartate + ATP = (2S)-2-[5-amino-1-(5-phospho-beta-D-ribosyl)imidazole-4-carboxamido]succinate + ADP + phosphate + 2 H(+). It functions in the pathway purine metabolism; IMP biosynthesis via de novo pathway; 5-amino-1-(5-phospho-D-ribosyl)imidazole-4-carboxamide from 5-amino-1-(5-phospho-D-ribosyl)imidazole-4-carboxylate: step 1/2. This is Putative phosphoribosylaminoimidazole-succinocarboxamide synthase 2 (purC2) from Agrobacterium fabrum (strain C58 / ATCC 33970) (Agrobacterium tumefaciens (strain C58)).